The primary structure comprises 128 residues: Large ribosomal subunit protein bL20 (128 aa).

It belongs to the bacterial ribosomal protein bL20 family.

In terms of biological role, binds directly to 23S ribosomal RNA and is necessary for the in vitro assembly process of the 50S ribosomal subunit. It is not involved in the protein synthesizing functions of that subunit. The chain is Large ribosomal subunit protein bL20 from Corynebacterium efficiens (strain DSM 44549 / YS-314 / AJ 12310 / JCM 11189 / NBRC 100395).